The primary structure comprises 359 residues: Phospho-N-acetylmuramoyl-pentapeptide-transferase (359 aa).

The next 10 membrane-spanning stretches (helical) occupy residues Q3–I23, V55–F75, V80–L100, T117–F137, I156–A176, L187–F207, L231–A251, I255–T275, I280–I300, and F334–L354.

It belongs to the glycosyltransferase 4 family. MraY subfamily. Mg(2+) is required as a cofactor.

The protein localises to the cell membrane. It catalyses the reaction UDP-N-acetyl-alpha-D-muramoyl-L-alanyl-gamma-D-glutamyl-meso-2,6-diaminopimeloyl-D-alanyl-D-alanine + di-trans,octa-cis-undecaprenyl phosphate = di-trans,octa-cis-undecaprenyl diphospho-N-acetyl-alpha-D-muramoyl-L-alanyl-D-glutamyl-meso-2,6-diaminopimeloyl-D-alanyl-D-alanine + UMP. The protein operates within cell wall biogenesis; peptidoglycan biosynthesis. In terms of biological role, catalyzes the initial step of the lipid cycle reactions in the biosynthesis of the cell wall peptidoglycan: transfers peptidoglycan precursor phospho-MurNAc-pentapeptide from UDP-MurNAc-pentapeptide onto the lipid carrier undecaprenyl phosphate, yielding undecaprenyl-pyrophosphoryl-MurNAc-pentapeptide, known as lipid I. This is Phospho-N-acetylmuramoyl-pentapeptide-transferase from Mycobacterium leprae (strain TN).